We begin with the raw amino-acid sequence, 327 residues long: Undecaprenyl-phosphate 4-deoxy-4-formamido-L-arabinose transferase (327 aa).

Residues 1-235 (MFDAAPIKKV…TCLTTTPLRL (235 aa)) are Cytoplasmic-facing. The chain crosses the membrane as a helical span at residues 236 to 256 (LSLLGSVIAIGGFSLSVLLIV). Over 257–269 (LRLALGPQWAAEG) the chain is Periplasmic. Residues 270 to 290 (VFMLFAVLFTFIGAQFIGMGL) form a helical membrane-spanning segment. Residues 291–327 (LGEYIGRIYNDVRARPRYFVQQVIYPESTPFTEESHQ) lie on the Cytoplasmic side of the membrane.

This sequence belongs to the glycosyltransferase 2 family.

It localises to the cell inner membrane. The enzyme catalyses UDP-4-deoxy-4-formamido-beta-L-arabinose + di-trans,octa-cis-undecaprenyl phosphate = 4-deoxy-4-formamido-alpha-L-arabinopyranosyl di-trans,octa-cis-undecaprenyl phosphate + UDP. It participates in glycolipid biosynthesis; 4-amino-4-deoxy-alpha-L-arabinose undecaprenyl phosphate biosynthesis; 4-amino-4-deoxy-alpha-L-arabinose undecaprenyl phosphate from UDP-4-deoxy-4-formamido-beta-L-arabinose and undecaprenyl phosphate: step 1/2. Its pathway is bacterial outer membrane biogenesis; lipopolysaccharide biosynthesis. Catalyzes the transfer of 4-deoxy-4-formamido-L-arabinose from UDP to undecaprenyl phosphate. The modified arabinose is attached to lipid A and is required for resistance to polymyxin and cationic antimicrobial peptides. This is Undecaprenyl-phosphate 4-deoxy-4-formamido-L-arabinose transferase from Salmonella agona (strain SL483).